The following is a 194-amino-acid chain: Small ribosomal subunit protein uS4c (194 aa).

Positions 1–29 are disordered; the sequence is RFKKIRRLGTLPGLTSKRPRSGSDLKNPL. An S4 RNA-binding domain is found at 82–143; it reads MRLDNILFRL…KQRSKALIQN (62 aa).

It belongs to the universal ribosomal protein uS4 family. As to quaternary structure, part of the 30S ribosomal subunit. Contacts protein S5. The interaction surface between S4 and S5 is involved in control of translational fidelity.

It is found in the plastid. Its subcellular location is the chloroplast. Its function is as follows. One of the primary rRNA binding proteins, it binds directly to 16S rRNA where it nucleates assembly of the body of the 30S subunit. Functionally, with S5 and S12 plays an important role in translational accuracy. This Furcraea foetida (Mauritius hemp) protein is Small ribosomal subunit protein uS4c (rps4).